The following is a 140-amino-acid chain: Heavy metal-associated isoprenylated plant protein 31 (140 aa).

Residues Met-3–Glu-67 form the HMA domain. 2 residues coordinate a metal cation: Cys-14 and Cys-17. At Cys-137 the chain carries Cysteine methyl ester. The S-farnesyl cysteine moiety is linked to residue Cys-137. Residues Thr-138–Met-140 constitute a propeptide, removed in mature form.

Belongs to the HIPP family.

Its function is as follows. Heavy-metal-binding protein. This is Heavy metal-associated isoprenylated plant protein 31 from Arabidopsis thaliana (Mouse-ear cress).